The chain runs to 348 residues: Beta-hexosaminidase (348 aa).

Substrate contacts are provided by residues aspartate 64, arginine 72, arginine 138, and 168–169 (KH). Histidine 181 acts as the Proton donor/acceptor in catalysis. The active-site Nucleophile is aspartate 252.

This sequence belongs to the glycosyl hydrolase 3 family. NagZ subfamily.

It is found in the cytoplasm. The enzyme catalyses Hydrolysis of terminal non-reducing N-acetyl-D-hexosamine residues in N-acetyl-beta-D-hexosaminides.. The protein operates within cell wall biogenesis; peptidoglycan recycling. Its function is as follows. Plays a role in peptidoglycan recycling by cleaving the terminal beta-1,4-linked N-acetylglucosamine (GlcNAc) from peptide-linked peptidoglycan fragments, giving rise to free GlcNAc, anhydro-N-acetylmuramic acid and anhydro-N-acetylmuramic acid-linked peptides. The protein is Beta-hexosaminidase of Nitrosomonas eutropha (strain DSM 101675 / C91 / Nm57).